The sequence spans 497 residues: Cytochrome P450 71A18 (497 aa).

Residues 4 to 24 form a helical membrane-spanning segment; sequence TLMVSLCLTTLLTLLLLKKFL. Cys-439 serves as a coordination point for heme.

The protein belongs to the cytochrome P450 family. Heme serves as cofactor.

The protein localises to the membrane. The protein is Cytochrome P450 71A18 (CYP71A18) of Arabidopsis thaliana (Mouse-ear cress).